Here is a 334-residue protein sequence, read N- to C-terminus: Thioredoxin reductase (334 aa).

FAD is bound by residues 11–14 (SGAG), 40–41 (TA), glutamine 45, asparagine 54, cysteine 148, aspartate 294, and 301–303 (RQA). Cysteine 145 and cysteine 148 are disulfide-bonded.

The protein belongs to the class-II pyridine nucleotide-disulfide oxidoreductase family. As to quaternary structure, homodimer. The cofactor is FAD.

The catalysed reaction is [thioredoxin]-dithiol + NADP(+) = [thioredoxin]-disulfide + NADPH + H(+). Functionally, component of the thioredoxin-thioredoxin reductase system which may be involved in biosynthesis of penicillins and cephalosporins and may be important in determining the thiol-disulfide redox balance. This Penicillium chrysogenum (Penicillium notatum) protein is Thioredoxin reductase (TRR1).